The sequence spans 504 residues: MAERKVRVRFAPSPTGALHIGGVRTALYNYLFARQHGGDLIFRIEDTDSNRFVPGAEEYILESFKWLGIHFDEGVSFGGEHGPYRQSERREIYKKYVQILLDNDKAYIAFDTPEELDAKRAEIANFQYDASTRGMMRNSLTMSKEEVDALIAEGKQYVVRFKIEPNEDVHVNDLIRGEVVINSSILDDKVLYKSADELPTYHLANIVDDHLMEVSHVIRGEEWLPSAPLHVLLYRAFGWEDTMPEFAHLPLLLKPEGNGKLSKRDGDRLGFPVFPLEWRPESGEVSSGYRESGYLPEAVINFLALLGWNPGNDQEVMSMDEMIKLFDIHRCSKSGAKFDYKKGIWFNHQYIQLKPNEEIAELFLPVLKEHGVEAPFEKVVTVVGMMKDRVSFIKELWDVCSFFFVAPAEYDEKTVKKRWKEDSAKCMTELAEVIAGIEDFSIEGQEKVVMDWIAEKGYHTGNIMNAFRLTLVGEGKGPHMFDISWVLGKEETLARMKRAVEVLK.

A 'HIGH' region motif is present at residues 12-22 (PSPTGALHIGG). The 'KMSKS' region motif lies at 260–264 (KLSKR). Lys-263 lines the ATP pocket.

The protein belongs to the class-I aminoacyl-tRNA synthetase family. Glutamate--tRNA ligase type 1 subfamily. In terms of assembly, monomer.

It is found in the cytoplasm. The enzyme catalyses tRNA(Glu) + L-glutamate + ATP = L-glutamyl-tRNA(Glu) + AMP + diphosphate. Its function is as follows. Catalyzes the attachment of glutamate to tRNA(Glu) in a two-step reaction: glutamate is first activated by ATP to form Glu-AMP and then transferred to the acceptor end of tRNA(Glu). The sequence is that of Glutamate--tRNA ligase from Bacteroides thetaiotaomicron (strain ATCC 29148 / DSM 2079 / JCM 5827 / CCUG 10774 / NCTC 10582 / VPI-5482 / E50).